Here is a 595-residue protein sequence, read N- to C-terminus: FERM domain-containing protein 3 (595 aa).

Residues 32–312 (MKCTIRLLDD…ENQAFYKYAK (281 aa)) form the FERM domain. A helical membrane pass occupies residues 529-549 (LLVVGLGLLLFVFPLLLLLLE).

It localises to the membrane. In terms of biological role, putative tumor suppressor gene that may be implicated in the origin and progression of lung cancer. The protein is FERM domain-containing protein 3 (Frmd3) of Mus musculus (Mouse).